The primary structure comprises 92 residues: Small ribosomal subunit protein uS15 (92 aa).

It belongs to the universal ribosomal protein uS15 family. In terms of assembly, part of the 30S ribosomal subunit. Forms a bridge to the 50S subunit in the 70S ribosome, contacting the 23S rRNA.

Its function is as follows. One of the primary rRNA binding proteins, it binds directly to 16S rRNA where it helps nucleate assembly of the platform of the 30S subunit by binding and bridging several RNA helices of the 16S rRNA. Forms an intersubunit bridge (bridge B4) with the 23S rRNA of the 50S subunit in the ribosome. The sequence is that of Small ribosomal subunit protein uS15 from Symbiobacterium thermophilum (strain DSM 24528 / JCM 14929 / IAM 14863 / T).